The sequence spans 1413 residues: DNA-directed RNA polymerase subunit beta' (1413 aa).

Zn(2+) is bound by residues Cys70, Cys72, Cys85, and Cys88. 3 residues coordinate Mg(2+): Asp460, Asp462, and Asp464. Residues Cys814, Cys888, Cys895, and Cys898 each coordinate Zn(2+).

Belongs to the RNA polymerase beta' chain family. As to quaternary structure, the RNAP catalytic core consists of 2 alpha, 1 beta, 1 beta' and 1 omega subunit. When a sigma factor is associated with the core the holoenzyme is formed, which can initiate transcription. It depends on Mg(2+) as a cofactor. Requires Zn(2+) as cofactor.

The catalysed reaction is RNA(n) + a ribonucleoside 5'-triphosphate = RNA(n+1) + diphosphate. Functionally, DNA-dependent RNA polymerase catalyzes the transcription of DNA into RNA using the four ribonucleoside triphosphates as substrates. This chain is DNA-directed RNA polymerase subunit beta', found in Buchnera aphidicola subsp. Schizaphis graminum (strain Sg).